We begin with the raw amino-acid sequence, 1464 residues long: DNA polymerase III PolC-type (1464 aa).

One can recognise an Exonuclease domain in the interval 426-582 (YVVFDVETTG…YDAEATGRLL (157 aa)).

It belongs to the DNA polymerase type-C family. PolC subfamily.

It is found in the cytoplasm. It carries out the reaction DNA(n) + a 2'-deoxyribonucleoside 5'-triphosphate = DNA(n+1) + diphosphate. In terms of biological role, required for replicative DNA synthesis. This DNA polymerase also exhibits 3' to 5' exonuclease activity. This chain is DNA polymerase III PolC-type, found in Streptococcus thermophilus (strain CNRZ 1066).